The chain runs to 531 residues: Apolipoprotein N-acyltransferase (531 aa).

Helical transmembrane passes span 8-28, 34-54, 69-89, 105-125, 136-156, 178-198, and 207-227; these read IILL…LLAV, FGIF…IDGV, PAAI…WWLG, LAVV…VVIA, IAAL…VFTG, VVNL…PALI, and GLAI…YRLA. One can recognise a CN hydrolase domain in the interval 243–493; that stretch reads VQPVIDQAKK…RGVLDTILPG (251 aa). The Proton acceptor role is filled by glutamate 287. The active site involves lysine 351. Cysteine 405 functions as the Nucleophile in the catalytic mechanism. A helical membrane pass occupies residues 507-527; the sequence is IFWLSMAILSIVASFSRFGFN.

The protein belongs to the CN hydrolase family. Apolipoprotein N-acyltransferase subfamily.

Its subcellular location is the cell inner membrane. It catalyses the reaction N-terminal S-1,2-diacyl-sn-glyceryl-L-cysteinyl-[lipoprotein] + a glycerophospholipid = N-acyl-S-1,2-diacyl-sn-glyceryl-L-cysteinyl-[lipoprotein] + a 2-acyl-sn-glycero-3-phospholipid + H(+). It participates in protein modification; lipoprotein biosynthesis (N-acyl transfer). Its function is as follows. Catalyzes the phospholipid dependent N-acylation of the N-terminal cysteine of apolipoprotein, the last step in lipoprotein maturation. This chain is Apolipoprotein N-acyltransferase, found in Sinorhizobium medicae (strain WSM419) (Ensifer medicae).